Here is an 81-residue protein sequence, read N- to C-terminus: Photosystem I iron-sulfur center (81 aa).

2 4Fe-4S ferredoxin-type domains span residues 2–31 (AHSV…MVPW) and 39–68 (IASA…VRVY). Residues Cys11, Cys14, Cys17, Cys21, Cys48, Cys51, Cys54, and Cys58 each contribute to the [4Fe-4S] cluster site.

As to quaternary structure, the eukaryotic PSI reaction center is composed of at least 11 subunits. The cofactor is [4Fe-4S] cluster.

It is found in the plastid. The protein localises to the chloroplast thylakoid membrane. The catalysed reaction is reduced [plastocyanin] + hnu + oxidized [2Fe-2S]-[ferredoxin] = oxidized [plastocyanin] + reduced [2Fe-2S]-[ferredoxin]. Its function is as follows. Apoprotein for the two 4Fe-4S centers FA and FB of photosystem I (PSI); essential for photochemical activity. FB is the terminal electron acceptor of PSI, donating electrons to ferredoxin. The C-terminus interacts with PsaA/B/D and helps assemble the protein into the PSI complex. Required for binding of PsaD and PsaE to PSI. PSI is a plastocyanin-ferredoxin oxidoreductase, converting photonic excitation into a charge separation, which transfers an electron from the donor P700 chlorophyll pair to the spectroscopically characterized acceptors A0, A1, FX, FA and FB in turn. The sequence is that of Photosystem I iron-sulfur center from Physcomitrium patens (Spreading-leaved earth moss).